A 409-amino-acid chain; its full sequence is Phosphoglycerate kinase (409 aa).

Residues aspartate 22–asparagine 24, arginine 37, histidine 60–arginine 63, arginine 122, and arginine 164 contribute to the substrate site. ATP is bound by residues lysine 215, glutamate 338, and glycine 365 to serine 368.

It belongs to the phosphoglycerate kinase family. Monomer.

The protein localises to the cytoplasm. It carries out the reaction (2R)-3-phosphoglycerate + ATP = (2R)-3-phospho-glyceroyl phosphate + ADP. Its pathway is carbohydrate degradation; glycolysis; pyruvate from D-glyceraldehyde 3-phosphate: step 2/5. In Mycoplasma pneumoniae (strain ATCC 29342 / M129 / Subtype 1) (Mycoplasmoides pneumoniae), this protein is Phosphoglycerate kinase (pgk).